The primary structure comprises 101 residues: Apolipoprotein C-II (101 aa).

A signal peptide spans 1 to 22 (MGTRFLLALCLVLLVLGFEVQG). Residues 66–74 (AVDEKLRDL) form a lipid binding region. The tract at residues 78-101 (STAAMSTYTGIFTDQVLSVLKGEE) is lipoprotein lipase cofactor.

Belongs to the apolipoprotein C2 family. Post-translationally, proapolipoprotein C-II is synthesized as a sialic acid containing glycoprotein which is subsequently desialylated prior to its proteolytic processing. Proapolipoprotein C-II, the major form found in plasma undergoes proteolytic cleavage of its N-terminal hexapeptide to generate apolipoprotein C-II, which occurs as the minor form in plasma.

It localises to the secreted. In terms of biological role, component of chylomicrons, very low-density lipoproteins (VLDL), low-density lipoproteins (LDL), and high-density lipoproteins (HDL) in plasma. Plays an important role in lipoprotein metabolism as an activator of lipoprotein lipase. Both proapolipoprotein C-II and apolipoprotein C-II can activate lipoprotein lipase. The protein is Apolipoprotein C-II (APOC2) of Colobus guereza (Mantled guereza).